Reading from the N-terminus, the 173-residue chain is Ribosome maturation factor RimM (173 aa).

Residues 95 to 169 form the PRC barrel domain; that stretch reads PDEFYDHELE…TIVIDPPEGL (75 aa).

The protein belongs to the RimM family. Binds ribosomal protein uS19.

It localises to the cytoplasm. Its function is as follows. An accessory protein needed during the final step in the assembly of 30S ribosomal subunit, possibly for assembly of the head region. Essential for efficient processing of 16S rRNA. May be needed both before and after RbfA during the maturation of 16S rRNA. It has affinity for free ribosomal 30S subunits but not for 70S ribosomes. The chain is Ribosome maturation factor RimM from Mycolicibacterium smegmatis (strain ATCC 700084 / mc(2)155) (Mycobacterium smegmatis).